Here is a 209-residue protein sequence, read N- to C-terminus: ATP phosphoribosyltransferase (209 aa).

This sequence belongs to the ATP phosphoribosyltransferase family. Short subfamily. As to quaternary structure, heteromultimer composed of HisG and HisZ subunits.

It is found in the cytoplasm. It catalyses the reaction 1-(5-phospho-beta-D-ribosyl)-ATP + diphosphate = 5-phospho-alpha-D-ribose 1-diphosphate + ATP. It functions in the pathway amino-acid biosynthesis; L-histidine biosynthesis; L-histidine from 5-phospho-alpha-D-ribose 1-diphosphate: step 1/9. Functionally, catalyzes the condensation of ATP and 5-phosphoribose 1-diphosphate to form N'-(5'-phosphoribosyl)-ATP (PR-ATP). Has a crucial role in the pathway because the rate of histidine biosynthesis seems to be controlled primarily by regulation of HisG enzymatic activity. The chain is ATP phosphoribosyltransferase from Alkaliphilus metalliredigens (strain QYMF).